Consider the following 466-residue polypeptide: ATP synthase subunit beta (466 aa).

148–155 is an ATP binding site; that stretch reads GGAGVGKT.

Belongs to the ATPase alpha/beta chains family. F-type ATPases have 2 components, CF(1) - the catalytic core - and CF(0) - the membrane proton channel. CF(1) has five subunits: alpha(3), beta(3), gamma(1), delta(1), epsilon(1). CF(0) has three main subunits: a(1), b(2) and c(9-12). The alpha and beta chains form an alternating ring which encloses part of the gamma chain. CF(1) is attached to CF(0) by a central stalk formed by the gamma and epsilon chains, while a peripheral stalk is formed by the delta and b chains.

The protein resides in the cell inner membrane. The enzyme catalyses ATP + H2O + 4 H(+)(in) = ADP + phosphate + 5 H(+)(out). In terms of biological role, produces ATP from ADP in the presence of a proton gradient across the membrane. The catalytic sites are hosted primarily by the beta subunits. The chain is ATP synthase subunit beta from Xylella fastidiosa (strain 9a5c).